We begin with the raw amino-acid sequence, 394 residues long: 1-deoxy-D-xylulose 5-phosphate reductoisomerase (394 aa).

Threonine 12, glycine 13, serine 14, isoleucine 15, glycine 38, asparagine 41, and asparagine 132 together coordinate NADPH. Position 133 (lysine 133) interacts with 1-deoxy-D-xylulose 5-phosphate. Position 134 (glutamate 134) interacts with NADPH. A Mn(2+)-binding site is contributed by aspartate 156. Residues serine 157, glutamate 158, serine 182, and histidine 205 each coordinate 1-deoxy-D-xylulose 5-phosphate. Glutamate 158 serves as a coordination point for Mn(2+). Glycine 211 contacts NADPH. 1-deoxy-D-xylulose 5-phosphate is bound by residues serine 218, asparagine 223, lysine 224, and glutamate 227. Glutamate 227 is a Mn(2+) binding site.

It belongs to the DXR family. Mg(2+) is required as a cofactor. The cofactor is Mn(2+).

It catalyses the reaction 2-C-methyl-D-erythritol 4-phosphate + NADP(+) = 1-deoxy-D-xylulose 5-phosphate + NADPH + H(+). The protein operates within isoprenoid biosynthesis; isopentenyl diphosphate biosynthesis via DXP pathway; isopentenyl diphosphate from 1-deoxy-D-xylulose 5-phosphate: step 1/6. Its function is as follows. Catalyzes the NADPH-dependent rearrangement and reduction of 1-deoxy-D-xylulose-5-phosphate (DXP) to 2-C-methyl-D-erythritol 4-phosphate (MEP). The protein is 1-deoxy-D-xylulose 5-phosphate reductoisomerase of Pseudarthrobacter chlorophenolicus (strain ATCC 700700 / DSM 12829 / CIP 107037 / JCM 12360 / KCTC 9906 / NCIMB 13794 / A6) (Arthrobacter chlorophenolicus).